A 153-amino-acid chain; its full sequence is Large ribosomal subunit protein uL15 (153 aa).

Over residues 1-40 (MTDKKRRQRGSRTHGGGTHKNRRGAGNRGGRGRAGRKKHE) the composition is skewed to basic residues. The segment at 1-60 (MTDKKRRQRGSRTHGGGTHKNRRGAGNRGGRGRAGRKKHEQHNYEDVGKSGFKRPEKTDR) is disordered. A compositionally biased stretch (basic and acidic residues) spans 41–60 (QHNYEDVGKSGFKRPEKTDR).

This sequence belongs to the universal ribosomal protein uL15 family. As to quaternary structure, part of the 50S ribosomal subunit.

Binds to the 23S rRNA. The polypeptide is Large ribosomal subunit protein uL15 (Halobacterium salinarum (strain ATCC 29341 / DSM 671 / R1)).